Reading from the N-terminus, the 222-residue chain is 7-cyano-7-deazaguanine synthase (222 aa).

ATP is bound at residue 9-19 (ISGGMDSALSA). Zn(2+)-binding residues include C188, C196, C199, and C202.

It belongs to the QueC family. Zn(2+) serves as cofactor.

The catalysed reaction is 7-carboxy-7-deazaguanine + NH4(+) + ATP = 7-cyano-7-deazaguanine + ADP + phosphate + H2O + H(+). It functions in the pathway purine metabolism; 7-cyano-7-deazaguanine biosynthesis. In terms of biological role, catalyzes the ATP-dependent conversion of 7-carboxy-7-deazaguanine (CDG) to 7-cyano-7-deazaguanine (preQ(0)). In Sulfurovum sp. (strain NBC37-1), this protein is 7-cyano-7-deazaguanine synthase.